Here is a 210-residue protein sequence, read N- to C-terminus: Thymidylate kinase (210 aa).

Residue 10–17 (GPEGAGKS) participates in ATP binding.

The protein belongs to the thymidylate kinase family.

It catalyses the reaction dTMP + ATP = dTDP + ADP. Functionally, phosphorylation of dTMP to form dTDP in both de novo and salvage pathways of dTTP synthesis. This chain is Thymidylate kinase, found in Pseudomonas savastanoi pv. phaseolicola (strain 1448A / Race 6) (Pseudomonas syringae pv. phaseolicola (strain 1448A / Race 6)).